Consider the following 324-residue polypeptide: Hairy/enhancer-of-split related with YRPW motif protein 2 (324 aa).

The tract at residues 1–34 is disordered; it reads MKRPCEDSTSDSDMDETIDVGSENNYSGQSNGSF. Over residues 8-18 the composition is skewed to acidic residues; sequence STSDSDMDETI. Over residues 22–34 the composition is skewed to polar residues; the sequence is SENNYSGQSNGSF. One can recognise a bHLH domain in the interval 48–103; sequence ARKKRRGIIEKRRRDRINNSLSELRRLVPTAFEKQGSAKLEKAEILQMTVDHLKML. The Orange domain maps to 122–157; it reads LSIGFRECLTEVARYLSSVEGLDSSDPLRVRLVSHL. A compositionally biased stretch (low complexity) spans 294-311; sequence SSSVSTSTTSQQSSGSSS. Positions 294 to 324 are disordered; the sequence is SSSVSTSTTSQQSSGSSSKPYRPWGTEVGAF. Residues 314-317 carry the YRPW motif motif; sequence YRPW.

This sequence belongs to the HEY family.

The protein resides in the nucleus. Functionally, transcriptional repressor. Downstream effector of Notch signaling which regulates cell fate choice in angioblasts. Represses the venous cell fate, thereby promoting the arterial cell fate and aorta formation. The sequence is that of Hairy/enhancer-of-split related with YRPW motif protein 2 (hey2) from Danio rerio (Zebrafish).